The following is a 448-amino-acid chain: Trigger factor (448 aa).

One can recognise a PPIase FKBP-type domain in the interval 173 to 258 (SDRVTIDFVG…LKQIEWAHMP (86 aa)).

Belongs to the FKBP-type PPIase family. Tig subfamily.

The protein localises to the cytoplasm. The enzyme catalyses [protein]-peptidylproline (omega=180) = [protein]-peptidylproline (omega=0). Its function is as follows. Involved in protein export. Acts as a chaperone by maintaining the newly synthesized protein in an open conformation. Functions as a peptidyl-prolyl cis-trans isomerase. This chain is Trigger factor, found in Herminiimonas arsenicoxydans.